The sequence spans 354 residues: Trans-L-3-hydroxyproline dehydratase (354 aa).

Catalysis depends on Cys-104, which acts as the Proton acceptor. Substrate contacts are provided by residues 105 to 106, Asp-269, and 274 to 275; these read GH and GS.

This sequence belongs to the proline racemase family. As to quaternary structure, homodimer.

It carries out the reaction trans-3-hydroxy-L-proline = 1-pyrroline-2-carboxylate + H2O. Its function is as follows. Catalyzes the dehydration of trans-3-hydroxy-L-proline to delta-1-pyrroline-2-carboxylate (Pyr2C). This chain is Trans-L-3-hydroxyproline dehydratase (L3HYPDH), found in Pongo abelii (Sumatran orangutan).